The following is a 348-amino-acid chain: Inactive rhomboid-related protein 2 (348 aa).

The EF-hand domain occupies 14-49 (IEASSWIRIFRAFDTDHDGLIQCEEMQKTIRDSTYS). Ca(2+)-binding residues include aspartate 27, aspartate 29, aspartate 31, and glutamate 38. 7 helical membrane-spanning segments follow: residues 121–141 (PPIFLIFLSIVQLAFYLYYVV), 177–197 (LINVGIFHIIFNILIQLAIGV), 207–227 (IYILYFMGVLFGSILSLALDP), 229–249 (VFLCGGAAGSFSLIASHITTI), 263–283 (LPILIVFAALDYVLAVYQRFF), 290–310 (VSMYGHLGGLVAGILFTFILF), and 323–343 (FWVSLVLSGFFIAICITLIAA).

Belongs to the peptidase S54 family.

The protein resides in the membrane. Its function is as follows. Probable inactive serine protease. This is Inactive rhomboid-related protein 2 from Caenorhabditis elegans.